A 463-amino-acid polypeptide reads, in one-letter code: Type II NADH:quinone oxidoreductase Ndh (463 aa).

FAD-binding positions include Gly-21–Gly-25 and Val-89. The active site involves Glu-184. FAD contacts are provided by residues Asp-322 and Ala-333 to Gln-334. Residues Phe-387–Phe-407 form a helical membrane-spanning segment.

The protein belongs to the NADH dehydrogenase family. FAD serves as cofactor.

It localises to the cell inner membrane. It catalyses the reaction a quinone + NADH + H(+) = a quinol + NAD(+). The enzyme catalyses a menaquinone + NADH + H(+) = a menaquinol + NAD(+). It carries out the reaction a ubiquinone + NADH + H(+) = a ubiquinol + NAD(+). Inhibited by phenothiazine analogs. Inhibited by 2-mercapto-quinazolinones. Not inhibited by classic inhibitors of type I NADH dehydrogenase, such as rotenone, piericidin A and pyridaben. Functionally, alternative, nonproton pumping NADH:quinone oxidoreductase that delivers electrons to the respiratory chain by oxidation of NADH and reduction of quinones. Ndh is probably the main NADH dehydrogenase of M.tuberculosis. The chain is Type II NADH:quinone oxidoreductase Ndh from Mycobacterium tuberculosis (strain ATCC 25618 / H37Rv).